A 466-amino-acid chain; its full sequence is tRNA-2-methylthio-N(6)-dimethylallyladenosine synthase (466 aa).

One can recognise an MTTase N-terminal domain in the interval 3–123 (KKLYIKTYGC…LPEMVARAVR (121 aa)). C12, C48, C86, C162, C166, and C169 together coordinate [4Fe-4S] cluster. Residues 148 to 381 (SPAGPSAFLS…QQLLTAQQTA (234 aa)) form the Radical SAM core domain. Positions 384-446 (TACVGRVQPV…ANSLSGTVVV (63 aa)) constitute a TRAM domain.

This sequence belongs to the methylthiotransferase family. MiaB subfamily. In terms of assembly, monomer. [4Fe-4S] cluster is required as a cofactor.

The protein localises to the cytoplasm. The enzyme catalyses N(6)-dimethylallyladenosine(37) in tRNA + (sulfur carrier)-SH + AH2 + 2 S-adenosyl-L-methionine = 2-methylsulfanyl-N(6)-dimethylallyladenosine(37) in tRNA + (sulfur carrier)-H + 5'-deoxyadenosine + L-methionine + A + S-adenosyl-L-homocysteine + 2 H(+). Its function is as follows. Catalyzes the methylthiolation of N6-(dimethylallyl)adenosine (i(6)A), leading to the formation of 2-methylthio-N6-(dimethylallyl)adenosine (ms(2)i(6)A) at position 37 in tRNAs that read codons beginning with uridine. This chain is tRNA-2-methylthio-N(6)-dimethylallyladenosine synthase, found in Rhodospirillum centenum (strain ATCC 51521 / SW).